The primary structure comprises 591 residues: Formate--tetrahydrofolate ligase (591 aa).

Position 74-81 (74-81 (TPLGEGKS)) interacts with ATP.

This sequence belongs to the formate--tetrahydrofolate ligase family.

The catalysed reaction is (6S)-5,6,7,8-tetrahydrofolate + formate + ATP = (6R)-10-formyltetrahydrofolate + ADP + phosphate. Its pathway is one-carbon metabolism; tetrahydrofolate interconversion. The polypeptide is Formate--tetrahydrofolate ligase (Lawsonia intracellularis (strain PHE/MN1-00)).